Consider the following 111-residue polypeptide: Cytochrome c (111 aa).

Position 1 is an N-acetylalanine (Ala1). Residues Cys22, Cys25, and His26 each coordinate heme c. An N6,N6,N6-trimethyllysine modification is found at Lys80. Met88 contacts heme c. At Lys94 the chain carries N6,N6,N6-trimethyllysine.

It belongs to the cytochrome c family. In terms of processing, binds 1 heme c group covalently per subunit.

It localises to the mitochondrion intermembrane space. Electron carrier protein. The oxidized form of the cytochrome c heme group can accept an electron from the heme group of the cytochrome c1 subunit of cytochrome reductase. Cytochrome c then transfers this electron to the cytochrome oxidase complex, the final protein carrier in the mitochondrial electron-transport chain. The polypeptide is Cytochrome c (Cucurbita maxima (Pumpkin)).